Here is a 286-residue protein sequence, read N- to C-terminus: Polyamine aminopropyltransferase (286 aa).

Residues 9 to 242 (NGWIDEHHQG…GWWSWTFAAI (234 aa)) enclose the PABS domain. Residue Q36 coordinates S-methyl-5'-thioadenosine. The spermidine site is built by H67 and D91. S-methyl-5'-thioadenosine contacts are provided by residues E111 and 143 to 144 (NG). D162 serves as the catalytic Proton acceptor. Residue P169 coordinates S-methyl-5'-thioadenosine.

Belongs to the spermidine/spermine synthase family. Homodimer or homotetramer.

It localises to the cytoplasm. The enzyme catalyses S-adenosyl 3-(methylsulfanyl)propylamine + putrescine = S-methyl-5'-thioadenosine + spermidine + H(+). Its pathway is amine and polyamine biosynthesis; spermidine biosynthesis; spermidine from putrescine: step 1/1. In terms of biological role, catalyzes the irreversible transfer of a propylamine group from the amino donor S-adenosylmethioninamine (decarboxy-AdoMet) to putrescine (1,4-diaminobutane) to yield spermidine. In Prochlorococcus marinus (strain MIT 9313), this protein is Polyamine aminopropyltransferase.